A 98-amino-acid polypeptide reads, in one-letter code: MSMVYFNIFMAFTVSFVGLLMYRSHLMSSLLCLEGMMLSLFVMMSMTILNNHFTLASMAPIILLVFAACEAALGLSLLVMVSNTYGTDYVQNLNLLQC.

Helical transmembrane passes span M1–M21, S29–L49, and I61–V81.

Belongs to the complex I subunit 4L family. Core subunit of respiratory chain NADH dehydrogenase (Complex I) which is composed of 45 different subunits.

The protein localises to the mitochondrion inner membrane. It catalyses the reaction a ubiquinone + NADH + 5 H(+)(in) = a ubiquinol + NAD(+) + 4 H(+)(out). Its function is as follows. Core subunit of the mitochondrial membrane respiratory chain NADH dehydrogenase (Complex I) which catalyzes electron transfer from NADH through the respiratory chain, using ubiquinone as an electron acceptor. Part of the enzyme membrane arm which is embedded in the lipid bilayer and involved in proton translocation. The polypeptide is NADH-ubiquinone oxidoreductase chain 4L (MT-ND4L) (Arctocephalus australis (South American fur seal)).